The sequence spans 320 residues: UDP-N-acetylenolpyruvoylglucosamine reductase (320 aa).

In terms of domain architecture, FAD-binding PCMH-type spans 35-216 (RAGGPAQVLF…KQAMDEVQHH (182 aa)). Arg181 is a catalytic residue. Ser230 serves as the catalytic Proton donor. Glu300 is an active-site residue.

This sequence belongs to the MurB family. FAD serves as cofactor.

It is found in the cytoplasm. The enzyme catalyses UDP-N-acetyl-alpha-D-muramate + NADP(+) = UDP-N-acetyl-3-O-(1-carboxyvinyl)-alpha-D-glucosamine + NADPH + H(+). The protein operates within cell wall biogenesis; peptidoglycan biosynthesis. Functionally, cell wall formation. This chain is UDP-N-acetylenolpyruvoylglucosamine reductase, found in Brucella anthropi (strain ATCC 49188 / DSM 6882 / CCUG 24695 / JCM 21032 / LMG 3331 / NBRC 15819 / NCTC 12168 / Alc 37) (Ochrobactrum anthropi).